The sequence spans 592 residues: Vacuolar protein sorting-associated protein 33 (592 aa).

It belongs to the STXBP/unc-18/SEC1 family.

Functionally, essential for vacuolar biogenesis, maturation and function. Involved in the sorting of vacuolar proteins from the Golgi apparatus and their targeting to the vacuole. The polypeptide is Vacuolar protein sorting-associated protein 33 (vps33) (Schizosaccharomyces pombe (strain 972 / ATCC 24843) (Fission yeast)).